Reading from the N-terminus, the 136-residue chain is MTSLSRPCVEFISTILQTVLNLGLLCLGLILVVFLGKETVHLADVLFAPEQTSKYELVEGLVVYFLYFEFIALIVKYFQSGFHFPLRYFVYIGITAIVRLIIVDHKSPLDVLIYSAAILLLVITLWLCNSKRLKRE.

Transmembrane regions (helical) follow at residues 15-35, 55-75, 82-102, and 108-128; these read ILQT…VVFL, YELV…ALIV, FHFP…RLII, and PLDV…LWLC.

The protein belongs to the PsiE family.

The protein localises to the cell inner membrane. This chain is Protein PsiE, found in Escherichia coli O17:K52:H18 (strain UMN026 / ExPEC).